Reading from the N-terminus, the 99-residue chain is DNA-directed RNA polymerase subunit omega (99 aa).

Belongs to the RNA polymerase subunit omega family. As to quaternary structure, the RNAP catalytic core consists of 2 alpha, 1 beta, 1 beta' and 1 omega subunit. When a sigma factor is associated with the core the holoenzyme is formed, which can initiate transcription.

It carries out the reaction RNA(n) + a ribonucleoside 5'-triphosphate = RNA(n+1) + diphosphate. Functionally, promotes RNA polymerase assembly. Latches the N- and C-terminal regions of the beta' subunit thereby facilitating its interaction with the beta and alpha subunits. The chain is DNA-directed RNA polymerase subunit omega from Deinococcus deserti (strain DSM 17065 / CIP 109153 / LMG 22923 / VCD115).